The primary structure comprises 507 residues: MLAPPEVAALPDRLTFKPLGIDTWQEHVIYMHPDCAICRAEGFTAQARVEVRIGLRSLIATLNLVGSGLLEMCEVSLSVSAVETLMARPGDIVTVSHAPALESLRAVRAKIYGAHLDTHQLASVVGDIAKERYADVHIAAFLSACAGGRMSVKETIDLTQAMVDSGECLEWDREIVADKHCVGGLPGNRTSPIVVAIAAAAGLLLPKTSSRAITSPAGTADTMETLTRVALSATELRRVVDRVGASLAWGGALSLSPADDVLIRVERALDVDSDAQLAASILSKKIAAGSTHVLIDVPVGPTAKVRSLQDLERLRMLLERVARSFGVRVTIVRTDGSQPVGRGIGPALEARDVLAVLQRSPAAPFDLRERSLLLAATLLEFCGAVEQGAGLEMATGVLDSGAAWRKFEEICEAQGGLRVPGEAIFRRDVVAEQDGIVTEIDNRHLARIAKLAGAPMRQVAGVEMHVRLHDQVKAGRPLFTIHAQASGELEYSVAYALMHPAVSIAPT.

Belongs to the thymidine/pyrimidine-nucleoside phosphorylase family. Type 2 subfamily.

It carries out the reaction thymidine + phosphate = 2-deoxy-alpha-D-ribose 1-phosphate + thymine. The protein is Putative thymidine phosphorylase of Ralstonia nicotianae (strain ATCC BAA-1114 / GMI1000) (Ralstonia solanacearum).